The sequence spans 122 residues: HLLKFNKMIKFETRKNAIPFYAFYGCYCGWGGRXXXXXXXXXCCFVHDCCYGKXXXXXXXWDLYPYXXXSGYLTCGKGTWCEEQICECDRVAAECLRRSLSTYKYGYMFYPDSRCRGPSETC.

Disulfide bonds link cysteine 26–cysteine 115, cysteine 28–cysteine 44, cysteine 43–cysteine 95, cysteine 49–cysteine 122, cysteine 50–cysteine 88, and cysteine 75–cysteine 86. Positions 27, 29, and 31 each coordinate Ca(2+). Histidine 47 is a catalytic residue. Aspartate 48 serves as a coordination point for Ca(2+). Aspartate 89 is a catalytic residue.

In terms of assembly, monomer. Requires Ca(2+) as cofactor. As to expression, expressed by the venom gland.

The protein resides in the secreted. The catalysed reaction is a 1,2-diacyl-sn-glycero-3-phosphocholine + H2O = a 1-acyl-sn-glycero-3-phosphocholine + a fatty acid + H(+). Functionally, snake venom phospholipase A2 (PLA2) that may display neurotoxic and myotoxic activities. May induce inflammatory edema by mechanisms involving mast cell activation and arachidonic acid metabolites. May increase plasma creatine kinase activity. PLA2 catalyzes the calcium-dependent hydrolysis of the 2-acyl groups in 3-sn-phosphoglycerides. This Lachesis muta muta (Bushmaster) protein is Basic phospholipase A2 LmTX-II.